Reading from the N-terminus, the 439-residue chain is Keratin, type I cytoskeletal 40 (439 aa).

The segment at 1–89 (MASDGSPSCC…CEEGSFNSNE (89 aa)) is head. The IF rod domain occupies 89-400 (EKETMQFLND…GLLEKEDSRL (312 aa)). The tract at residues 90 to 124 (KETMQFLNDRLASYLERVRSLEENNAELECRIREQ) is coil 1A. Residues 125–135 (CEPNAPLVCPD) are linker 1. Residues 136-236 (YQRYFDTIEE…HEEEVNLLRE (101 aa)) form a coil 1B region. A linker 12 region spans residues 237 to 252 (QLGDRLSVELDTAPTV). The coil 2 stretch occupies residues 253–396 (DLNKVLDEMR…NTYRGLLEKE (144 aa)). Residues 397-439 (DSRLPCNPGSGAPMPNSTCEPCSNSMCEPCSAYVICTVENCCA) form a tail region.

This sequence belongs to the intermediate filament family. In terms of assembly, heterotetramer of two type I and two type II keratins.

In terms of biological role, may play a role in late hair differentiation. This is Keratin, type I cytoskeletal 40 (Krt40) from Mus musculus (Mouse).